The chain runs to 281 residues: NADPH-dependent 7-cyano-7-deazaguanine reductase (281 aa).

87–89 (VES) contacts substrate. 89 to 90 (SK) is a binding site for NADPH. Residue Cys-188 is the Thioimide intermediate of the active site. Asp-195 functions as the Proton donor in the catalytic mechanism. 227 to 228 (HE) is a binding site for substrate. 256-257 (RG) lines the NADPH pocket.

It belongs to the GTP cyclohydrolase I family. QueF type 2 subfamily. As to quaternary structure, homodimer.

The protein resides in the cytoplasm. The catalysed reaction is 7-aminomethyl-7-carbaguanine + 2 NADP(+) = 7-cyano-7-deazaguanine + 2 NADPH + 3 H(+). It functions in the pathway tRNA modification; tRNA-queuosine biosynthesis. Its function is as follows. Catalyzes the NADPH-dependent reduction of 7-cyano-7-deazaguanine (preQ0) to 7-aminomethyl-7-deazaguanine (preQ1). This is NADPH-dependent 7-cyano-7-deazaguanine reductase from Aliivibrio salmonicida (strain LFI1238) (Vibrio salmonicida (strain LFI1238)).